The primary structure comprises 674 residues: Leucine-rich repeat transmembrane protein FLRT1 (674 aa).

The signal sequence occupies residues 1 to 51 (MVVAHSAATATTTPAATVTATVVMTTATMDLRDWLFLCYGLIAFLTEVIDS). At 52-552 (TTCPSVCRCD…QNAGPMAGLP (501 aa)) the chain is on the extracellular side. Intrachain disulfides connect Cys54-Cys60 and Cys58-Cys67. The 27-residue stretch at 54–80 (CPSVCRCDNGFIYCNDRGLTSIPSDIP) folds into the LRRNT domain. LRR repeat units follow at residues 81 to 105 (DDAT…LKTK), 106 to 126 (VKVQ…INLP), 127 to 149 (RSLR…SLAR), 151 to 175 (PLLE…AFAD), 176 to 197 (SKQL…SGLP), 198 to 220 (HTLE…AFKG), 222 to 246 (NSLR…TFSR), 247 to 269 (LQNL…NLPS), 270 to 292 (AHLQ…TLAK), and 293 to 316 (MREL…LFDD). Residue Asn305 is glycosylated (N-linked (GlcNAc...) asparagine). Positions 328 to 379 (NPWFCGCNLMWLRDWVRARAAVVNVRGLMCQGPEKVRGMAIKDITSEMDECF) constitute an LRRCT domain. Cysteines 332 and 357 form a disulfide. One can recognise a Fibronectin type-III domain in the interval 437–532 (KTLVIQVKPL…VCAKAETADS (96 aa)). Residues 553 to 573 (LAGIIGGAVALVFLFLVLGAI) form a helical membrane-spanning segment. Topologically, residues 574 to 674 (CWYVHRAGEL…GIPDVDYSYT (101 aa)) are cytoplasmic. A phosphotyrosine mark is found at Tyr600, Tyr633, and Tyr671.

Interacts with FGFR1. Interacts (via extracellular domain) with ADGRL1/LPHN1 and ADGRL3 (via olfactomedin-like domain). Post-translationally, phosphorylated in response to FGFR1 signaling, but is not a direct substrate of FGFR1 or SRC. A mutant where the Tyr phosphorylation sites have been replaced by Phe displays constitutive FGFR1-dependent activation of downstream MAP kinases. In terms of processing, N-glycosylated. Proteolytic cleavage in the juxtamembrane region gives rise to a soluble ectodomain. In terms of tissue distribution, detected in brain (at protein level).

The protein resides in the cell membrane. Its subcellular location is the endoplasmic reticulum membrane. It is found in the cytoplasmic vesicle membrane. The protein localises to the cytoplasm. It localises to the perinuclear region. The protein resides in the cell junction. Its subcellular location is the focal adhesion. It is found in the secreted. The protein localises to the cell projection. It localises to the neuron projection. Functionally, plays a role in fibroblast growth factor-mediated signaling cascades that lead to the activation of MAP kinases. Promotes neurite outgrowth via FGFR1-mediated activation of downstream MAP kinases. Promotes an increase both in neurite number and in neurite length. May play a role in cell-cell adhesion and cell guidance via its interaction with ADGRL1/LPHN1 and ADGRL3. The chain is Leucine-rich repeat transmembrane protein FLRT1 from Mus musculus (Mouse).